A 1003-amino-acid chain; its full sequence is Translation initiation factor IF-2 (1003 aa).

5 stretches are compositionally biased toward basic and acidic residues: residues 61–74 (EKFS…DRNK), 139–169 (PVVE…KKPE), 180–206 (LEEK…KETP), 219–229 (VFKIRPTEFKS), and 252–290 (SKEE…DKIS). 2 disordered regions span residues 61 to 81 (EKFS…SIEG) and 135 to 362 (PKAE…KDRF). The segment covering 315 to 350 (NAAGTTNAGGASNNNQRNDNANRPNRNNNSKPNGNN) has biased composition (low complexity). Positions 502–672 (PRAPIVTVMG…LLEAEMLDLK (171 aa)) constitute a tr-type G domain. Residues 511–518 (GHVDHGKT) form a G1 region. 511 to 518 (GHVDHGKT) lines the GTP pocket. The G2 stretch occupies residues 536-540 (GITQH). The segment at 558–561 (DTPG) is G3. Residues 558–562 (DTPGH) and 612–615 (NKVD) contribute to the GTP site. Residues 612-615 (NKVD) are G4. Residues 648 to 650 (SAK) are G5.

Belongs to the TRAFAC class translation factor GTPase superfamily. Classic translation factor GTPase family. IF-2 subfamily.

The protein localises to the cytoplasm. Its function is as follows. One of the essential components for the initiation of protein synthesis. Protects formylmethionyl-tRNA from spontaneous hydrolysis and promotes its binding to the 30S ribosomal subunits. Also involved in the hydrolysis of GTP during the formation of the 70S ribosomal complex. The sequence is that of Translation initiation factor IF-2 from Phocaeicola vulgatus (strain ATCC 8482 / DSM 1447 / JCM 5826 / CCUG 4940 / NBRC 14291 / NCTC 11154) (Bacteroides vulgatus).